Here is a 385-residue protein sequence, read N- to C-terminus: MDIRRDFHMAEGEGEWSYSKNCRRQQVAVRETRPMVETAVKQVYAALLPRTMVVADLGCSAGPNTLLFISSVLSSIAAAAAEQCKPPSGGGDDDDHHVELQFVLNDLPGNDFNHLFRSVEEEFRRAAGCERAPHPPYYVMGLPESYYNRLFPRQSVHLFHSSYCLQWRSQEPEGLEAWRKPCLNEDNIYIARTTTPSVAKLFQEQFQKDFSLFLKLRHEELVHGGRMVLIFLGRKNEDVYSGDLNQLFALVATALQSLVLKGLVEKEKLESFNLPVYGPSVGEVEELVTRSGLQFSMDLIKQFEMNWDPFDDSEGDNDVVVVEDSARSSVNVAKLIRSVLKALVVRHFGEAVLDACFAEFRRLVAEHLGKEKTKFTTIAMCLKKE.

An S-adenosyl-L-homocysteine-binding site is contributed by tyrosine 18. Glutamine 25 contacts benzoate. Residues cysteine 59, asparagine 64, aspartate 106, leucine 107, serine 145, and tyrosine 146 each coordinate S-adenosyl-L-homocysteine. Tryptophan 167 lines the benzoate pocket. Positions 184, 270, 272, and 273 each coordinate Mg(2+).

Belongs to the methyltransferase superfamily. Type-7 methyltransferase family. SABATH subfamily. Requires Mg(2+) as cofactor.

The enzyme catalyses benzoate + S-adenosyl-L-methionine = methyl benzoate + S-adenosyl-L-homocysteine. Methyltransferase involved in the biosynthesis of methyl benzoate in response to stresses. Utilizes exclusively benzoic acid (BA) as substrate. In Zea mays (Maize), this protein is Benzoate O-methyltransferase (OMT8).